The sequence spans 198 residues: uncharacterized protein (198 aa).

An N-terminal signal peptide occupies residues 1–28; it reads MHPTQRKLMKRIILFLSLLFCIACPAIA.

It belongs to the fimbrial protein family.

The protein resides in the fimbrium. Functionally, part of the yadCKLM-htrE-yadVN fimbrial operon. Could contribute to adhesion to various surfaces in specific environmental niches. This is an uncharacterized protein from Escherichia coli (strain K12).